Here is a 386-residue protein sequence, read N- to C-terminus: Aspergillopepsin-1 (386 aa).

Positions 1–20 are cleaved as a signal peptide; sequence MVVFSKVAAAAFGLSAVASA. The propeptide at 21 to 69 is activation peptide; the sequence is MPAAPPRQGFTINQLTRAIPKRTINLPAIYANALSKYGGNVPPHIQDAM. Residues 85-383 enclose the Peptidase A1 domain; the sequence is YLTPVAVGGT…DSEGPQLGFA (299 aa). Residue Asp101 is part of the active site. Asn130 is a glycosylation site (N-linked (GlcNAc...) asparagine). Asp275 is a catalytic residue. Cys311 and Cys346 form a disulfide bridge.

This sequence belongs to the peptidase A1 family. In terms of assembly, monomer.

It is found in the secreted. The catalysed reaction is Hydrolysis of proteins with broad specificity. Generally favors hydrophobic residues in P1 and P1', but also accepts Lys in P1, which leads to activation of trypsinogen. Does not clot milk.. In terms of biological role, secreted aspartic endopeptidase that allows assimilation of proteinaceous substrates. The scissile peptide bond is attacked by a nucleophilic water molecule activated by two aspartic residues in the active site. Shows a broad primary substrate specificity. Favors hydrophobic residues at the P1 and P1' positions, but also accepts a lysine residue in the P1 position, leading to the activation of trypsinogen and chymotrypsinogen A. The polypeptide is Aspergillopepsin-1 (Emericella nidulans (strain FGSC A4 / ATCC 38163 / CBS 112.46 / NRRL 194 / M139) (Aspergillus nidulans)).